Consider the following 131-residue polypeptide: RutC family protein YjgH (131 aa).

The protein belongs to the RutC family.

The protein is RutC family protein YjgH (yjgH) of Escherichia coli (strain K12).